We begin with the raw amino-acid sequence, 217 residues long: Putative threonylcarbamoyl-AMP synthase (217 aa).

Residues 14–199 form the YrdC-like domain; sequence SRGIVSAVGA…TPRVLRPGPV (186 aa).

This sequence belongs to the SUA5 family.

The protein localises to the cytoplasm. The enzyme catalyses L-threonine + hydrogencarbonate + ATP = L-threonylcarbamoyladenylate + diphosphate + H2O. Functionally, required for the formation of a threonylcarbamoyl group on adenosine at position 37 (t(6)A37) in tRNAs that read codons beginning with adenine. Catalyzes the conversion of L-threonine, HCO(3)(-)/CO(2) and ATP to give threonylcarbamoyl-AMP (TC-AMP) as the acyladenylate intermediate, with the release of diphosphate. The protein is Putative threonylcarbamoyl-AMP synthase of Mycobacterium tuberculosis (strain CDC 1551 / Oshkosh).